Reading from the N-terminus, the 333-residue chain is Holliday junction branch migration complex subunit RuvB (333 aa).

The large ATPase domain (RuvB-L) stretch occupies residues 1-182 (MDERLLSGES…FGVLSRLEYY (182 aa)). Residues Leu-21, Arg-22, Gly-63, Lys-66, Thr-67, Thr-68, 129–131 (EDF), Arg-172, Tyr-182, and Arg-219 each bind ATP. Thr-67 lines the Mg(2+) pocket. The tract at residues 183 to 253 (TVDQLSAIVE…ITQMALELLQ (71 aa)) is small ATPAse domain (RuvB-S). Residues 256–333 (KLGLDHIDHK…EHFGMEMPKV (78 aa)) form a head domain (RuvB-H) region. DNA-binding residues include Arg-311 and Arg-316.

It belongs to the RuvB family. Homohexamer. Forms an RuvA(8)-RuvB(12)-Holliday junction (HJ) complex. HJ DNA is sandwiched between 2 RuvA tetramers; dsDNA enters through RuvA and exits via RuvB. An RuvB hexamer assembles on each DNA strand where it exits the tetramer. Each RuvB hexamer is contacted by two RuvA subunits (via domain III) on 2 adjacent RuvB subunits; this complex drives branch migration. In the full resolvosome a probable DNA-RuvA(4)-RuvB(12)-RuvC(2) complex forms which resolves the HJ.

Its subcellular location is the cytoplasm. The catalysed reaction is ATP + H2O = ADP + phosphate + H(+). The RuvA-RuvB-RuvC complex processes Holliday junction (HJ) DNA during genetic recombination and DNA repair, while the RuvA-RuvB complex plays an important role in the rescue of blocked DNA replication forks via replication fork reversal (RFR). RuvA specifically binds to HJ cruciform DNA, conferring on it an open structure. The RuvB hexamer acts as an ATP-dependent pump, pulling dsDNA into and through the RuvAB complex. RuvB forms 2 homohexamers on either side of HJ DNA bound by 1 or 2 RuvA tetramers; 4 subunits per hexamer contact DNA at a time. Coordinated motions by a converter formed by DNA-disengaged RuvB subunits stimulates ATP hydrolysis and nucleotide exchange. Immobilization of the converter enables RuvB to convert the ATP-contained energy into a lever motion, pulling 2 nucleotides of DNA out of the RuvA tetramer per ATP hydrolyzed, thus driving DNA branch migration. The RuvB motors rotate together with the DNA substrate, which together with the progressing nucleotide cycle form the mechanistic basis for DNA recombination by continuous HJ branch migration. Branch migration allows RuvC to scan DNA until it finds its consensus sequence, where it cleaves and resolves cruciform DNA. This is Holliday junction branch migration complex subunit RuvB from Bacillus cereus (strain 03BB102).